Consider the following 70-residue polypeptide: Large ribosomal subunit protein eL24 (70 aa).

Zn(2+) contacts are provided by cysteine 7, cysteine 10, cysteine 33, and cysteine 37. The segment at 7 to 37 adopts a C4-type zinc-finger fold; that stretch reads CSFCGYEIEPGKGKMVVEKDGTVLYFCSSKC.

The protein belongs to the eukaryotic ribosomal protein eL24 family. Part of the 50S ribosomal subunit. Forms a cluster with proteins L3 and L14. Zn(2+) is required as a cofactor.

Its function is as follows. Binds to the 23S rRNA. The chain is Large ribosomal subunit protein eL24 from Methanocaldococcus jannaschii (strain ATCC 43067 / DSM 2661 / JAL-1 / JCM 10045 / NBRC 100440) (Methanococcus jannaschii).